Consider the following 427-residue polypeptide: Enolase (427 aa).

Q163 lines the (2R)-2-phosphoglycerate pocket. E205 acts as the Proton donor in catalysis. D242, E285, and D312 together coordinate Mg(2+). Residues K337, R366, S367, and K388 each coordinate (2R)-2-phosphoglycerate. K337 serves as the catalytic Proton acceptor.

This sequence belongs to the enolase family. Requires Mg(2+) as cofactor.

The protein resides in the cytoplasm. It is found in the secreted. It localises to the cell surface. The enzyme catalyses (2R)-2-phosphoglycerate = phosphoenolpyruvate + H2O. Its pathway is carbohydrate degradation; glycolysis; pyruvate from D-glyceraldehyde 3-phosphate: step 4/5. In terms of biological role, catalyzes the reversible conversion of 2-phosphoglycerate (2-PG) into phosphoenolpyruvate (PEP). It is essential for the degradation of carbohydrates via glycolysis. In Ralstonia pickettii (strain 12J), this protein is Enolase.